We begin with the raw amino-acid sequence, 391 residues long: Dual-specificity RNA methyltransferase RlmN (391 aa).

Glu-115 acts as the Proton acceptor in catalysis. The 243-residue stretch at 121 to 363 (EENRGTLCIS…SPIRTPRGED (243 aa)) folds into the Radical SAM core domain. A disulfide bond links Cys-128 and Cys-368. Residues Cys-135, Cys-139, and Cys-142 each contribute to the [4Fe-4S] cluster site. S-adenosyl-L-methionine-binding positions include 194–195 (GE), Ser-226, 248–250 (SFH), and Asn-325. Cys-368 (S-methylcysteine intermediate) is an active-site residue.

Belongs to the radical SAM superfamily. RlmN family. [4Fe-4S] cluster is required as a cofactor.

The protein resides in the cytoplasm. It carries out the reaction adenosine(2503) in 23S rRNA + 2 reduced [2Fe-2S]-[ferredoxin] + 2 S-adenosyl-L-methionine = 2-methyladenosine(2503) in 23S rRNA + 5'-deoxyadenosine + L-methionine + 2 oxidized [2Fe-2S]-[ferredoxin] + S-adenosyl-L-homocysteine. The enzyme catalyses adenosine(37) in tRNA + 2 reduced [2Fe-2S]-[ferredoxin] + 2 S-adenosyl-L-methionine = 2-methyladenosine(37) in tRNA + 5'-deoxyadenosine + L-methionine + 2 oxidized [2Fe-2S]-[ferredoxin] + S-adenosyl-L-homocysteine. Functionally, specifically methylates position 2 of adenine 2503 in 23S rRNA and position 2 of adenine 37 in tRNAs. m2A2503 modification seems to play a crucial role in the proofreading step occurring at the peptidyl transferase center and thus would serve to optimize ribosomal fidelity. This is Dual-specificity RNA methyltransferase RlmN from Paracoccus denitrificans (strain Pd 1222).